Here is a 252-residue protein sequence, read N- to C-terminus: Protein Flattop homolog (252 aa).

A disordered region spans residues 177 to 252 (TEKRRRKRTI…EKERKAAKGH (76 aa)). The span at 218-252 (PKDKPKDKPKDKEAGKKDKTKDKGKEKERKAAKGH) shows a compositional bias: basic and acidic residues.

It belongs to the Flattop family.

The sequence is that of Protein Flattop homolog from Drosophila melanogaster (Fruit fly).